The following is a 406-amino-acid chain: Cysteine desulfurase (406 aa).

Lys-226 is modified (N6-(pyridoxal phosphate)lysine). Residue Cys-364 is the Cysteine persulfide intermediate of the active site.

This sequence belongs to the class-V pyridoxal-phosphate-dependent aminotransferase family. Csd subfamily. In terms of assembly, homodimer. Interacts with SufE and the SufBCD complex composed of SufB, SufC and SufD. The interaction with SufE is required to mediate the direct transfer of the sulfur atom from the S-sulfanylcysteine. The cofactor is pyridoxal 5'-phosphate.

Its subcellular location is the cytoplasm. The enzyme catalyses (sulfur carrier)-H + L-cysteine = (sulfur carrier)-SH + L-alanine. The catalysed reaction is L-selenocysteine + AH2 = hydrogenselenide + L-alanine + A + H(+). It functions in the pathway cofactor biosynthesis; iron-sulfur cluster biosynthesis. Functionally, cysteine desulfurases mobilize the sulfur from L-cysteine to yield L-alanine, an essential step in sulfur metabolism for biosynthesis of a variety of sulfur-containing biomolecules. Component of the suf operon, which is activated and required under specific conditions such as oxidative stress and iron limitation. Acts as a potent selenocysteine lyase in vitro, that mobilizes selenium from L-selenocysteine. Selenocysteine lyase activity is however unsure in vivo. The polypeptide is Cysteine desulfurase (Escherichia coli (strain K12 / MC4100 / BW2952)).